The sequence spans 375 residues: Serpentine receptor class alpha-39 (375 aa).

Helical transmembrane passes span 17 to 37, 51 to 71, 99 to 119, 138 to 158, 183 to 203, 236 to 256, and 275 to 295; these read LFAI…LFII, LVFL…LTAW, IRGT…GILL, LGTI…FILL, VYVM…VHLV, TPLL…VSVF, and LFIM…ELWL.

This sequence belongs to the nematode receptor-like protein sra family.

The protein localises to the membrane. The protein is Serpentine receptor class alpha-39 (sra-39) of Caenorhabditis elegans.